Reading from the N-terminus, the 228-residue chain is MNRASLEKNPHEVASMFDGVARRYDLTNTVLSLGQDRFWRRATREALQLSPADKVLDLAAGTAVSTVELASSGAWCVAADFSVGMLAAGASRRVPKVAGDATRLPFDDGVFDAVTISFGLRNVVDFSAGLREMARVTRPGGRLVVCEFSTPTNGLFSTVYKEYLMKALPAMATAVSSNPDAYVYLAESIRAWPDQRALARRIEAAGWSDVRWRNLTGGIVALHAATKP.

S-adenosyl-L-methionine contacts are provided by residues T62, D80, 100 to 101, and S117; that span reads DA.

It belongs to the class I-like SAM-binding methyltransferase superfamily. MenG/UbiE family.

The enzyme catalyses a 2-demethylmenaquinol + S-adenosyl-L-methionine = a menaquinol + S-adenosyl-L-homocysteine + H(+). It functions in the pathway quinol/quinone metabolism; menaquinone biosynthesis; menaquinol from 1,4-dihydroxy-2-naphthoate: step 2/2. In terms of biological role, methyltransferase required for the conversion of demethylmenaquinol (DMKH2) to menaquinol (MKH2). This is Demethylmenaquinone methyltransferase from Mycolicibacterium gilvum (strain PYR-GCK) (Mycobacterium gilvum (strain PYR-GCK)).